The primary structure comprises 692 residues: Protein arginine N-methyltransferase 7 (692 aa).

SAM-dependent MTase PRMT-type domains follow at residues 14-359 (ENSW…YSLW) and 368-692 (AKTV…QEKR).

This sequence belongs to the class I-like SAM-binding methyltransferase superfamily. Protein arginine N-methyltransferase family. PRMT7 subfamily.

Functionally, essential arginine methyltransferase that can both catalyze the formation of omega-N monomethylarginine (MMA) and symmetrical dimethylarginine (sDMA). Specifically mediates the symmetrical dimethylation of arginine residues in the small nuclear ribonucleoproteins SmD1 and SmD3. This chain is Protein arginine N-methyltransferase 7 (Art7), found in Drosophila pseudoobscura pseudoobscura (Fruit fly).